We begin with the raw amino-acid sequence, 345 residues long: N-acetyl-gamma-glutamyl-phosphate reductase (345 aa).

Cys-149 is an active-site residue.

Belongs to the NAGSA dehydrogenase family. Type 1 subfamily.

The protein localises to the cytoplasm. The enzyme catalyses N-acetyl-L-glutamate 5-semialdehyde + phosphate + NADP(+) = N-acetyl-L-glutamyl 5-phosphate + NADPH + H(+). The protein operates within amino-acid biosynthesis; L-arginine biosynthesis; N(2)-acetyl-L-ornithine from L-glutamate: step 3/4. Functionally, catalyzes the NADPH-dependent reduction of N-acetyl-5-glutamyl phosphate to yield N-acetyl-L-glutamate 5-semialdehyde. The chain is N-acetyl-gamma-glutamyl-phosphate reductase from Bacillus cereus (strain AH187).